The sequence spans 203 residues: Glycerol-3-phosphate acyltransferase (203 aa).

The next 5 helical transmembrane spans lie at 10 to 30, 60 to 80, 88 to 108, 118 to 138, and 162 to 182; these read LLLG…FGIM, LAAF…VFLA, AAQL…FLGF, LGTL…IWAI, and FTLG…LIFL.

It belongs to the PlsY family. Probably interacts with PlsX.

It is found in the cell inner membrane. It catalyses the reaction an acyl phosphate + sn-glycerol 3-phosphate = a 1-acyl-sn-glycero-3-phosphate + phosphate. Its pathway is lipid metabolism; phospholipid metabolism. Functionally, catalyzes the transfer of an acyl group from acyl-phosphate (acyl-PO(4)) to glycerol-3-phosphate (G3P) to form lysophosphatidic acid (LPA). This enzyme utilizes acyl-phosphate as fatty acyl donor, but not acyl-CoA or acyl-ACP. In Jannaschia sp. (strain CCS1), this protein is Glycerol-3-phosphate acyltransferase.